The sequence spans 273 residues: WIMGHMVNAIAQIDELVNLGANSIETDVSFDKNANPEYTYHGIPCDCGRTCTKSEKFNVFLQGLQKATTPGDSKYQEKLVLVVFDLKSSSLYDNQASDAGKKLAKSLLQNYWKNGNNGGRAYIVLSIPNLAHYKLITGFKETLKTEGHPELMEKVGYDFSGNDDIDQVAKAYKKAGVTGHVWQSDGITNCLPRGLDRVKQAVANRDSSNGFINKVYYWTVDKRSTTRGALDAGVDGIMTNYPDVIADVLSESAYKSKFRIATYEDNPWETFKN.

His-5 is an active-site residue. 2 residues coordinate Mg(2+): Glu-25 and Asp-27. The active-site Nucleophile is His-41. Intrachain disulfides connect Cys-45–Cys-51 and Cys-47–Cys-190. Asp-85 contributes to the Mg(2+) binding site.

The protein belongs to the arthropod phospholipase D family. Class II subfamily. Mg(2+) is required as a cofactor. In terms of tissue distribution, expressed by the venom gland.

Its subcellular location is the secreted. It catalyses the reaction an N-(acyl)-sphingosylphosphocholine = an N-(acyl)-sphingosyl-1,3-cyclic phosphate + choline. It carries out the reaction an N-(acyl)-sphingosylphosphoethanolamine = an N-(acyl)-sphingosyl-1,3-cyclic phosphate + ethanolamine. The enzyme catalyses a 1-acyl-sn-glycero-3-phosphocholine = a 1-acyl-sn-glycero-2,3-cyclic phosphate + choline. The catalysed reaction is a 1-acyl-sn-glycero-3-phosphoethanolamine = a 1-acyl-sn-glycero-2,3-cyclic phosphate + ethanolamine. Its function is as follows. Dermonecrotic toxins cleave the phosphodiester linkage between the phosphate and headgroup of certain phospholipids (sphingolipid and lysolipid substrates), forming an alcohol (often choline) and a cyclic phosphate. This toxin acts on sphingomyelin (SM). It may also act on ceramide phosphoethanolamine (CPE), lysophosphatidylcholine (LPC) and lysophosphatidylethanolamine (LPE), but not on lysophosphatidylserine (LPS), and lysophosphatidylglycerol (LPG). It acts by transphosphatidylation, releasing exclusively cyclic phosphate products as second products. Induces dermonecrosis, hemolysis, increased vascular permeability, edema, inflammatory response, and platelet aggregation. In Loxosceles deserta (Desert recluse spider), this protein is Dermonecrotic toxin LdSicTox-alphaIB3av.